Consider the following 449-residue polypeptide: Exodeoxyribonuclease 7 large subunit (449 aa).

Belongs to the XseA family. As to quaternary structure, heterooligomer composed of large and small subunits.

It localises to the cytoplasm. It carries out the reaction Exonucleolytic cleavage in either 5'- to 3'- or 3'- to 5'-direction to yield nucleoside 5'-phosphates.. Bidirectionally degrades single-stranded DNA into large acid-insoluble oligonucleotides, which are then degraded further into small acid-soluble oligonucleotides. The protein is Exodeoxyribonuclease 7 large subunit of Salmonella schwarzengrund (strain CVM19633).